An 833-amino-acid polypeptide reads, in one-letter code: Leucine--tRNA ligase (833 aa).

The 'HIGH' region motif lies at 41 to 52; that stretch reads PYPSGAGLHVGH. Positions 610 to 614 match the 'KMSKS' region motif; that stretch reads KMSKS. An ATP-binding site is contributed by K613.

Belongs to the class-I aminoacyl-tRNA synthetase family.

Its subcellular location is the cytoplasm. The catalysed reaction is tRNA(Leu) + L-leucine + ATP = L-leucyl-tRNA(Leu) + AMP + diphosphate. The polypeptide is Leucine--tRNA ligase (Streptococcus pneumoniae (strain Hungary19A-6)).